The primary structure comprises 166 residues: Large ribosomal subunit protein uL10 (166 aa).

Belongs to the universal ribosomal protein uL10 family. Part of the ribosomal stalk of the 50S ribosomal subunit. The N-terminus interacts with L11 and the large rRNA to form the base of the stalk. The C-terminus forms an elongated spine to which L12 dimers bind in a sequential fashion forming a multimeric L10(L12)X complex.

Its function is as follows. Forms part of the ribosomal stalk, playing a central role in the interaction of the ribosome with GTP-bound translation factors. The protein is Large ribosomal subunit protein uL10 of Pseudomonas paraeruginosa (strain DSM 24068 / PA7) (Pseudomonas aeruginosa (strain PA7)).